A 268-amino-acid polypeptide reads, in one-letter code: Exodeoxyribonuclease III (268 aa).

E34 contacts Mg(2+). The active site involves Y109. D151, N153, and D258 together coordinate Mg(2+). D151 serves as the catalytic Proton donor/acceptor.

The protein belongs to the DNA repair enzymes AP/ExoA family. Monomer. Requires Mg(2+) as cofactor. Mn(2+) is required as a cofactor.

It carries out the reaction Exonucleolytic cleavage in the 3'- to 5'-direction to yield nucleoside 5'-phosphates.. Functionally, major apurinic-apyrimidinic endonuclease of E.coli. It removes the damaged DNA at cytosines and guanines by cleaving on the 3'-side of the AP site by a beta-elimination reaction. It exhibits 3'-5'-exonuclease, 3'-phosphomonoesterase, 3'-repair diesterase and ribonuclease H activities. The protein is Exodeoxyribonuclease III (xthA) of Salmonella typhi.